Consider the following 452-residue polypeptide: FERM domain-containing protein 8 (452 aa).

In terms of domain architecture, FERM spans 28–374 (MDVIIYLIND…YCIELSQSTE (347 aa)). A compositionally biased stretch (polar residues) spans 373–387 (TESPASDSTPGNSQL). Positions 373-395 (TESPASDSTPGNSQLSEKRSKLK) are disordered.

It is found in the cytoplasm. It localises to the cytosol. The protein localises to the cell membrane. Its function is as follows. Promotes the cell surface stability of RHBDF1 and RHBDF2 and prevents their degradation via the endolysosomal pathway. By acting on RHBDF proteins, involved in ADAM17-mediated ligand shedding. May negatively regulate Wnt signaling. This Xenopus laevis (African clawed frog) protein is FERM domain-containing protein 8 (frmd8).